We begin with the raw amino-acid sequence, 694 residues long: Methionine--tRNA ligase (694 aa).

Positions 12-22 (PYANGPLHLGH) match the 'HIGH' region motif. 4 residues coordinate Zn(2+): C143, C146, C156, and C159. The short motif at 330-334 (KMSKS) is the 'KMSKS' region element. K333 lines the ATP pocket. The disordered stretch occupies residues 550 to 577 (LAAPATPATASKPAPAKADAKPAAAANP). The segment covering 551–575 (AAPATPATASKPAPAKADAKPAAAA) has biased composition (low complexity). Positions 591–694 (DFAKLDLRIG…SGAQPGMPVR (104 aa)) constitute a tRNA-binding domain.

Belongs to the class-I aminoacyl-tRNA synthetase family. MetG type 1 subfamily. As to quaternary structure, homodimer. The cofactor is Zn(2+).

Its subcellular location is the cytoplasm. It catalyses the reaction tRNA(Met) + L-methionine + ATP = L-methionyl-tRNA(Met) + AMP + diphosphate. Its function is as follows. Is required not only for elongation of protein synthesis but also for the initiation of all mRNA translation through initiator tRNA(fMet) aminoacylation. The sequence is that of Methionine--tRNA ligase from Xanthomonas axonopodis pv. citri (strain 306).